Consider the following 318-residue polypeptide: ADP-L-glycero-D-manno-heptose-6-epimerase (318 aa).

Residues 10 to 11 (FI), 31 to 32 (DD), Lys-38, Lys-53, and 79 to 83 (EGACS) contribute to the NADP(+) site. Residue Tyr-144 is the Proton acceptor of the active site. Residue Lys-148 coordinates NADP(+). A substrate-binding site is contributed by Asn-173. Val-174 and Lys-182 together coordinate NADP(+). Residue Lys-182 is the Proton acceptor of the active site. Substrate-binding positions include Ser-184, His-191, 205-208 (FEGC), Arg-218, and Tyr-282.

The protein belongs to the NAD(P)-dependent epimerase/dehydratase family. HldD subfamily. Homopentamer. It depends on NADP(+) as a cofactor.

The catalysed reaction is ADP-D-glycero-beta-D-manno-heptose = ADP-L-glycero-beta-D-manno-heptose. Its pathway is nucleotide-sugar biosynthesis; ADP-L-glycero-beta-D-manno-heptose biosynthesis; ADP-L-glycero-beta-D-manno-heptose from D-glycero-beta-D-manno-heptose 7-phosphate: step 4/4. In terms of biological role, catalyzes the interconversion between ADP-D-glycero-beta-D-manno-heptose and ADP-L-glycero-beta-D-manno-heptose via an epimerization at carbon 6 of the heptose. The chain is ADP-L-glycero-D-manno-heptose-6-epimerase from Aeromonas hydrophila subsp. hydrophila (strain ATCC 7966 / DSM 30187 / BCRC 13018 / CCUG 14551 / JCM 1027 / KCTC 2358 / NCIMB 9240 / NCTC 8049).